The chain runs to 542 residues: DM7 family protein GG17591 (542 aa).

Basic and acidic residues predominate over residues 415 to 430; sequence GETQEMDEAHPTKEES. Residues 415 to 443 are disordered; the sequence is GETQEMDEAHPTKEESKSEEEGEVQSGSQ.

The protein belongs to the DM7 family.

The protein is DM7 family protein GG17591 of Drosophila erecta (Fruit fly).